The primary structure comprises 328 residues: uncharacterized protein (328 aa).

The G-patch domain occupies 10–55 (KMGFGHAMLLKMGWKGKGLGVEEDGRTEIIVNKKKQDKVGVGASIS). The disordered stretch occupies residues 97–291 (EKITFKRTIK…KKSFSVSKTR (195 aa)). The segment covering 101 to 110 (FKRTIKKNSK) has biased composition (basic residues). Residues 116-126 (SDSDSDSDSES) are compositionally biased toward acidic residues. 2 stretches are compositionally biased toward low complexity: residues 141-158 (DSDS…SSSS) and 210-240 (SSSS…SSSE). Over residues 248–257 (KNKNKNKNKK) the composition is skewed to basic residues.

This is an uncharacterized protein from Dictyostelium discoideum (Social amoeba).